Here is a 479-residue protein sequence, read N- to C-terminus: ATP-dependent RNA helicase DDX19B (479 aa).

Ala-2 bears the N-acetylalanine mark. The segment at Ala-2–Glu-300 is N-terminal lobe. Residues Thr-34–Glu-54 form a disordered region. The segment at Asp-55–Ser-68 is N-terminal helix. Positions Lys-92–Glu-120 match the Q motif motif. ATP-binding positions include Gln-119 and Ser-138–Thr-145. A Helicase ATP-binding domain is found at Leu-125–Ile-295. The DEAD box motif lies at Asp-242 to Asp-245. A C-terminal lobe region spans residues Glu-301–Asn-479. In terms of domain architecture, Helicase C-terminal spans Thr-306–Ile-474. Positions 429 and 432 each coordinate ATP.

This sequence belongs to the DEAD box helicase family. DDX19/DBP5 subfamily. As to quaternary structure, associates with the nuclear pore complex via interaction with NUP214. Interacts with NUP214 or RNA in a mutually exclusive manner.

The protein localises to the cytoplasm. Its subcellular location is the nucleus. The protein resides in the nucleoplasm. It carries out the reaction ATP + H2O = ADP + phosphate + H(+). ATP-dependent RNA helicase involved in mRNA export from the nucleus. Rather than unwinding RNA duplexes, DDX19B functions as a remodeler of ribonucleoprotein particles, whereby proteins bound to nuclear mRNA are dissociated and replaced by cytoplasmic mRNA binding proteins. The polypeptide is ATP-dependent RNA helicase DDX19B (DDX19B) (Homo sapiens (Human)).